The primary structure comprises 92 residues: Small ribosomal subunit protein uS19c (92 aa).

Residues Glu73–Arg92 are disordered. The span at Tyr80 to Arg92 shows a compositional bias: basic residues.

It belongs to the universal ribosomal protein uS19 family.

It is found in the plastid. Its subcellular location is the chloroplast. Its function is as follows. Protein S19 forms a complex with S13 that binds strongly to the 16S ribosomal RNA. The sequence is that of Small ribosomal subunit protein uS19c (rps19) from Chlamydomonas reinhardtii (Chlamydomonas smithii).